Reading from the N-terminus, the 223-residue chain is Ras-related protein Rab-21 (223 aa).

N-acetylalanine is present on alanine 2. Positions 26, 29, 30, 31, 32, 43, 44, 46, 48, and 49 each coordinate GTP. Threonine 31 is a Mg(2+) binding site. Positions lysine 41–phenylalanine 54 match the Switch 1 motif. Mg(2+) is bound by residues threonine 49 and aspartate 72. Residues alanine 74 to glycine 92 carry the Switch 2 motif. 6 residues coordinate GTP: glycine 75, asparagine 130, lysine 131, aspartate 133, alanine 161, and lysine 162. Residues cysteine 219 and cysteine 220 are each lipidated (S-geranylgeranyl cysteine). Cysteine 220 carries the cysteine methyl ester modification. Residues serine 221–glycine 223 constitute a propeptide, removed in mature form.

This sequence belongs to the small GTPase superfamily. Rab family. Interacts with the cytoplasmic tail of integrins ITGA1, ITGA2, ITGA5, ITGA6, ITGA11 and ITGB1; this interaction is dependent upon its GDP/GTP cycle. Interacts with ANKRD27. Interacts (active GTP-bound form) with TMED10; the interaction is indirect and regulates TMED10 abundance and localization at the Golgi. The cofactor is Mg(2+).

Its subcellular location is the endoplasmic reticulum membrane. It is found in the golgi apparatus. It localises to the trans-Golgi network. The protein localises to the golgi apparatus membrane. The protein resides in the early endosome membrane. Its subcellular location is the cytoplasmic vesicle membrane. It is found in the cleavage furrow. It localises to the cell projection. The protein localises to the neuron projection. The catalysed reaction is GTP + H2O = GDP + phosphate + H(+). With respect to regulation, regulated by guanine nucleotide exchange factors (GEFs) including ANKRD27 and RABGEF1, which promote the exchange of bound GDP for free GTP. Regulated by GTPase activating proteins (GAPs) which increase the GTP hydrolysis activity. Inhibited by GDP dissociation inhibitors (GDIs). Functionally, the small GTPases Rab are key regulators of intracellular membrane trafficking, from the formation of transport vesicles to their fusion with membranes. Rabs cycle between an inactive GDP-bound form and an active GTP-bound form that is able to recruit to membranes different sets of downstream effectors directly responsible for vesicle formation, movement, tethering and fusion. RAB21 is involved in membrane trafficking control. Regulates integrin internalization and recycling, but does not influence the traffic of endosomally translocated receptors in general. As a result, may regulate cell adhesion and migration. During the mitosis of adherent cells, controls the endosomal trafficking of integrins which is required for the successful completion of cytokinesis. Involved in neurite growth. Modulates protein levels of the cargo receptors TMED2 and TMED10, and required for appropriate Golgi localization of TMED10. The sequence is that of Ras-related protein Rab-21 (RAB21) from Canis lupus familiaris (Dog).